Consider the following 143-residue polypeptide: MVKISDNSEIYDLIKDVTYLLGISIIEINTFRKRDEFKIQIVLYKSDNFSVDMLCDLHKMILLKLEAVLKYNVSLEISTPGINRKIKSDREFKIFEGKKIKLMLNNDFEEGFILRAERDGFIFKTEYKKVKILYSNVKKAKLS.

This sequence belongs to the RimP family.

Its subcellular location is the cytoplasm. Required for maturation of 30S ribosomal subunits. The chain is Ribosome maturation factor RimP from Borrelia recurrentis (strain A1).